Here is a 687-residue protein sequence, read N- to C-terminus: Translation initiation factor IF-2 (687 aa).

Residues 186–355 enclose the tr-type G domain; the sequence is KRPPIVTVMG…LLTAEMLELK (170 aa). Residues 195–202 are G1; it reads GHVDHGKT. Residue 195 to 202 coordinates GTP; sequence GHVDHGKT. A G2 region spans residues 220 to 224; sequence GITQH. The G3 stretch occupies residues 241 to 244; the sequence is DTPG. Residues 241–245 and 295–298 contribute to the GTP site; these read DTPGH and NKID. A G4 region spans residues 295-298; sequence NKID. The interval 331 to 333 is G5; that stretch reads SAK.

It belongs to the TRAFAC class translation factor GTPase superfamily. Classic translation factor GTPase family. IF-2 subfamily.

Its subcellular location is the cytoplasm. Functionally, one of the essential components for the initiation of protein synthesis. Protects formylmethionyl-tRNA from spontaneous hydrolysis and promotes its binding to the 30S ribosomal subunits. Also involved in the hydrolysis of GTP during the formation of the 70S ribosomal complex. The sequence is that of Translation initiation factor IF-2 from Clostridium botulinum (strain Eklund 17B / Type B).